Reading from the N-terminus, the 131-residue chain is Protein Turandot M (131 aa).

The N-terminal stretch at 1-23 is a signal peptide; the sequence is MNPTVYLSCLVVFSLFYLGKAQA.

The protein belongs to the Turandot family.

The protein resides in the secreted. A humoral factor that may play a role in stress tolerance. Requires Mekk1 expression in the fat body to regulate response to septic injury and consequent immune response. In Drosophila yakuba (Fruit fly), this protein is Protein Turandot M.